The following is a 268-amino-acid chain: Imidazole glycerol phosphate synthase subunit HisF (268 aa).

Catalysis depends on residues Asp-12 and Asp-131.

This sequence belongs to the HisA/HisF family. In terms of assembly, heterodimer of HisH and HisF.

It is found in the cytoplasm. It carries out the reaction 5-[(5-phospho-1-deoxy-D-ribulos-1-ylimino)methylamino]-1-(5-phospho-beta-D-ribosyl)imidazole-4-carboxamide + L-glutamine = D-erythro-1-(imidazol-4-yl)glycerol 3-phosphate + 5-amino-1-(5-phospho-beta-D-ribosyl)imidazole-4-carboxamide + L-glutamate + H(+). It participates in amino-acid biosynthesis; L-histidine biosynthesis; L-histidine from 5-phospho-alpha-D-ribose 1-diphosphate: step 5/9. Functionally, IGPS catalyzes the conversion of PRFAR and glutamine to IGP, AICAR and glutamate. The HisF subunit catalyzes the cyclization activity that produces IGP and AICAR from PRFAR using the ammonia provided by the HisH subunit. The sequence is that of Imidazole glycerol phosphate synthase subunit HisF from Chelativorans sp. (strain BNC1).